The chain runs to 254 residues: Pyridoxine 5'-phosphate synthase (254 aa).

Residue asparagine 12 participates in 3-amino-2-oxopropyl phosphate binding. Position 14–15 (14–15) interacts with 1-deoxy-D-xylulose 5-phosphate; the sequence is DH. Arginine 23 is a 3-amino-2-oxopropyl phosphate binding site. Catalysis depends on histidine 48, which acts as the Proton acceptor. 1-deoxy-D-xylulose 5-phosphate-binding residues include arginine 50 and histidine 55. Catalysis depends on glutamate 75, which acts as the Proton acceptor. Threonine 105 serves as a coordination point for 1-deoxy-D-xylulose 5-phosphate. Histidine 199 (proton donor) is an active-site residue. Residues glycine 200 and 221-222 contribute to the 3-amino-2-oxopropyl phosphate site; that span reads GF.

Belongs to the PNP synthase family. As to quaternary structure, homooctamer; tetramer of dimers.

The protein resides in the cytoplasm. The catalysed reaction is 3-amino-2-oxopropyl phosphate + 1-deoxy-D-xylulose 5-phosphate = pyridoxine 5'-phosphate + phosphate + 2 H2O + H(+). Its pathway is cofactor biosynthesis; pyridoxine 5'-phosphate biosynthesis; pyridoxine 5'-phosphate from D-erythrose 4-phosphate: step 5/5. Functionally, catalyzes the complicated ring closure reaction between the two acyclic compounds 1-deoxy-D-xylulose-5-phosphate (DXP) and 3-amino-2-oxopropyl phosphate (1-amino-acetone-3-phosphate or AAP) to form pyridoxine 5'-phosphate (PNP) and inorganic phosphate. The chain is Pyridoxine 5'-phosphate synthase from Rhodopseudomonas palustris (strain TIE-1).